A 489-amino-acid polypeptide reads, in one-letter code: WRKY transcription factor 72B (489 aa).

Disordered stretches follow at residues Met-1–Glu-100, Gln-131–Asp-159, and Asp-234–Val-267. Basic and acidic residues-rich tracts occupy residues Gly-32–Met-52 and Thr-83–Glu-100. Residues His-84 to Lys-132 adopt a coiled-coil conformation. Positions Ser-138–Thr-147 are enriched in low complexity. Residues Cys-273–Pro-339 constitute a DNA-binding region (WRKY). Disordered stretches follow at residues Leu-356–Thr-381 and Thr-427–Asn-454. Low complexity-rich tracts occupy residues Thr-371–Thr-381 and Thr-427–Ser-438.

Belongs to the WRKY group II-b family.

Its subcellular location is the nucleus. Functionally, in association with WRKY72A, contributes to basal defense against root-knot nematodes (RKNs) and potato aphids, as well as Mi-1-mediated gene-for-gene resistance to these pests. Both WRKY72A and WRKY72B are not required for gene-for-gene resistance mediated by Pto, another tomato R gene. This chain is WRKY transcription factor 72B, found in Solanum lycopersicum (Tomato).